The primary structure comprises 119 residues: Large ribosomal subunit protein bL17 (119 aa).

Belongs to the bacterial ribosomal protein bL17 family. Part of the 50S ribosomal subunit. Contacts protein L32.

The polypeptide is Large ribosomal subunit protein bL17 (Mesoplasma florum (strain ATCC 33453 / NBRC 100688 / NCTC 11704 / L1) (Acholeplasma florum)).